The following is a 267-amino-acid chain: Phosphatidylglycerol--prolipoprotein diacylglyceryl transferase (267 aa).

The next 4 membrane-spanning stretches (helical) occupy residues 20–40, 57–77, 88–108, and 117–137; these read LEIRWYAICILLGLILGVYLA, FILIAFPLSILGARIYYVAFS, IFAIWNGGIAIYGGLITGAIV, and FINTLDFLDIVAPSVMIAQAI. Arginine 139 lines the a 1,2-diacyl-sn-glycero-3-phospho-(1'-sn-glycerol) pocket. 3 helical membrane passes run 175–195, 205–225, and 235–255; these read QPTFLFESLWNLLGFGLVCVL, GEITAFYLVWYGCGRLLIEGL, and IRVSQWLSGVLILVGIIMVVL.

It belongs to the Lgt family.

The protein localises to the cell membrane. The catalysed reaction is L-cysteinyl-[prolipoprotein] + a 1,2-diacyl-sn-glycero-3-phospho-(1'-sn-glycerol) = an S-1,2-diacyl-sn-glyceryl-L-cysteinyl-[prolipoprotein] + sn-glycerol 1-phosphate + H(+). Its pathway is protein modification; lipoprotein biosynthesis (diacylglyceryl transfer). In terms of biological role, catalyzes the transfer of the diacylglyceryl group from phosphatidylglycerol to the sulfhydryl group of the N-terminal cysteine of a prolipoprotein, the first step in the formation of mature lipoproteins. The chain is Phosphatidylglycerol--prolipoprotein diacylglyceryl transferase from Streptococcus suis (strain 98HAH33).